The primary structure comprises 251 residues: 5-oxoprolinase subunit A (251 aa).

It belongs to the LamB/PxpA family. In terms of assembly, forms a complex composed of PxpA, PxpB and PxpC.

It catalyses the reaction 5-oxo-L-proline + ATP + 2 H2O = L-glutamate + ADP + phosphate + H(+). Its function is as follows. Catalyzes the cleavage of 5-oxoproline to form L-glutamate coupled to the hydrolysis of ATP to ADP and inorganic phosphate. The chain is 5-oxoprolinase subunit A from Paracidovorax citrulli (strain AAC00-1) (Acidovorax citrulli).